A 1025-amino-acid chain; its full sequence is Collagen alpha-1(VI) chain (1025 aa).

Residues 1-19 (MRLAHALLPLLLQACWVAT) form the signal peptide. Positions 20–255 (QDIQGSKAIA…CCSFECQAAR (236 aa)) are N-terminal globular domain. One can recognise a VWFA 1 domain in the interval 36 to 234 (DLFFVLDTSE…EVISQTIDTI (199 aa)). The N-linked (GlcNAc...) asparagine glycan is linked to N211. The interval 252 to 588 (QAARGPPGPR…QGPPGHVGPP (337 aa)) is disordered. The interval 256-591 (GPPGPRGDPG…PGHVGPPGPD (336 aa)) is triple-helical region. A Cell attachment site motif is present at residues 261-263 (RGD). 2 stretches are compositionally biased toward basic and acidic residues: residues 267 to 284 (EGER…EAGD) and 300 to 333 (KGEK…DGMK). 2 short sequence motifs (cell attachment site) span residues 441–443 (RGD) and 477–479 (RGD). Residues N515 and N536 are each glycosylated (N-linked (GlcNAc...) asparagine). Residues 549–559 (GEVGDPGEDNN) are compositionally biased toward acidic residues. The segment covering 578-588 (PQGPPGHVGPP) has biased composition (pro residues). Residues 592-1025 (ECEILDIIMK…QTVSRKVALG (434 aa)) are C-terminal globular domain. 2 consecutive VWFA domains span residues 614-802 (DILF…LKNI) and 826-1018 (DITI…YQTV). Residues N801 and N893 are each glycosylated (N-linked (GlcNAc...) asparagine).

Belongs to the type VI collagen family. In terms of assembly, trimers composed of three different chains: alpha-1(VI), alpha-2(VI), and alpha-3(VI) or alpha-4(VI) or alpha-5(VI) or alpha-6(VI). Prolines at the third position of the tripeptide repeating unit (G-X-Y) are hydroxylated in some or all of the chains.

It localises to the secreted. The protein resides in the extracellular space. The protein localises to the extracellular matrix. Functionally, collagen VI acts as a cell-binding protein. The polypeptide is Collagen alpha-1(VI) chain (Col6a1) (Mus musculus (Mouse)).